We begin with the raw amino-acid sequence, 502 residues long: Maturase K (502 aa).

Belongs to the intron maturase 2 family. MatK subfamily.

It localises to the plastid. The protein resides in the chloroplast. Usually encoded in the trnK tRNA gene intron. Probably assists in splicing its own and other chloroplast group II introns. The sequence is that of Maturase K from Cephalotaxus fortunei (Chinese plum-yew).